We begin with the raw amino-acid sequence, 126 residues long: DNA-directed RNA polymerase 35 kDa subunit (126 aa).

Belongs to the poxviridae DNA-directed RNA polymerase 35 kDa subunit family. The DNA-dependent RNA polymerase used for intermediate and late genes expression consists of eight subunits 147 kDa, 133 kDa, 35 kDa, 30 kDa, 22 kDa, 19 kDa, 18 kDa and 7 kDa totalling more than 500 kDa in mass. The same holoenzyme, with the addition of the transcription-specificity factor RAP94, is used for early gene expression.

It is found in the virion. It catalyses the reaction RNA(n) + a ribonucleoside 5'-triphosphate = RNA(n+1) + diphosphate. In terms of biological role, part of the DNA-dependent RNA polymerase which catalyzes the transcription of viral DNA into RNA using the four ribonucleoside triphosphates as substrates. Responsible for the transcription of early, intermediate and late genes. DNA-dependent RNA polymerase associates with the early transcription factor (ETF) thereby allowing the early genes transcription. Late transcription, and probably also intermediate transcription, require newly synthesized RNA polymerase. The sequence is that of DNA-directed RNA polymerase 35 kDa subunit (RPO35) from Ovis aries (Sheep).